Reading from the N-terminus, the 100-residue chain is Large ribosomal subunit protein uL23 (100 aa).

Belongs to the universal ribosomal protein uL23 family. As to quaternary structure, part of the 50S ribosomal subunit. Contacts protein L29, and trigger factor when it is bound to the ribosome.

In terms of biological role, one of the early assembly proteins it binds 23S rRNA. One of the proteins that surrounds the polypeptide exit tunnel on the outside of the ribosome. Forms the main docking site for trigger factor binding to the ribosome. This is Large ribosomal subunit protein uL23 from Rippkaea orientalis (strain PCC 8801 / RF-1) (Cyanothece sp. (strain PCC 8801)).